The primary structure comprises 260 residues: Carbonic anhydrase 2 (260 aa).

S2 carries the N-acetylserine modification. A Phosphoserine modification is found at S2. Residues H3 to F259 form the Alpha-carbonic anhydrase domain. Positions W16–Q39 are disordered. H64 serves as the catalytic Proton donor/acceptor. Residue S87 is modified to Phosphoserine. Zn(2+) is bound by residues H94, H96, and H119. S165 is subject to Phosphoserine. Substrate is bound at residue T198–T199. At S232 the chain carries Phosphoserine.

The protein belongs to the alpha-carbonic anhydrase family. Interacts with SLC4A4 and SLC26A6. Interaction with SLC4A7 regulates SLC4A7 transporter activity. Zn(2+) serves as cofactor.

Its subcellular location is the cytoplasm. The protein localises to the cell membrane. It catalyses the reaction hydrogencarbonate + H(+) = CO2 + H2O. It carries out the reaction urea = cyanamide + H2O. Inhibited by acetazolamide. Catalyzes the reversible hydration of carbon dioxide. Can also hydrate cyanamide to urea. Involved in the regulation of fluid secretion into the anterior chamber of the eye. Essential for bone resorption and osteoclast differentiation. Contributes to intracellular pH regulation in the duodenal upper villous epithelium during proton-coupled peptide absorption. Stimulates the chloride-bicarbonate exchange activity of SLC26A6. This Rattus norvegicus (Rat) protein is Carbonic anhydrase 2 (Ca2).